Consider the following 266-residue polypeptide: Putative carbamate hydrolase RutD (266 aa).

Positions 14 to 115 constitute an AB hydrolase-1 domain; it reads PVVVLISGLG…TVLVSVNGWL (102 aa).

The protein belongs to the AB hydrolase superfamily. Hydrolase RutD family.

It catalyses the reaction carbamate + 2 H(+) = NH4(+) + CO2. In terms of biological role, involved in pyrimidine catabolism. May facilitate the hydrolysis of carbamate, a reaction that can also occur spontaneously. The sequence is that of Putative carbamate hydrolase RutD from Escherichia coli O9:H4 (strain HS).